A 135-amino-acid chain; its full sequence is Protein KRTCAP2 homolog (135 aa).

The next 4 helical transmembrane spans lie at 1-21, 35-55, 69-89, and 93-113; these read MAVS…LLFA, PMAI…LTAI, TKLI…SGMV, and CITT…RISI.

This sequence belongs to the KRTCAP2 family. As to quaternary structure, component of the oligosaccharyltransferase (OST) complex.

It is found in the membrane. Its function is as follows. Subunit of the oligosaccharyl transferase (OST) complex that catalyzes the initial transfer of a defined glycan (Glc(3)Man(9)GlcNAc(2) in eukaryotes) from the lipid carrier dolichol-pyrophosphate to an asparagine residue within an Asn-X-Ser/Thr consensus motif in nascent polypeptide chains, the first step in protein N-glycosylation. N-glycosylation occurs cotranslationally and the complex associates with the Sec61 complex at the channel-forming translocon complex that mediates protein translocation across the endoplasmic reticulum (ER). All subunits are required for a maximal enzyme activity. In Ixodes scapularis (Black-legged tick), this protein is Protein KRTCAP2 homolog.